A 187-amino-acid polypeptide reads, in one-letter code: Small ribosomal subunit protein uS10m (187 aa).

Belongs to the universal ribosomal protein uS10 family. As to quaternary structure, component of the mitochondrial ribosome small subunit (28S) which comprises a 12S rRNA and about 30 distinct proteins.

The protein localises to the mitochondrion. The sequence is that of Small ribosomal subunit protein uS10m (mrps10) from Danio rerio (Zebrafish).